The chain runs to 430 residues: Serine--tRNA ligase (430 aa).

237-239 (TAE) is a binding site for L-serine. Position 268-270 (268-270 (RSE)) interacts with ATP. An L-serine-binding site is contributed by Glu291. 355–358 (EISS) is an ATP binding site. Ser391 provides a ligand contact to L-serine.

It belongs to the class-II aminoacyl-tRNA synthetase family. Type-1 seryl-tRNA synthetase subfamily. Homodimer. The tRNA molecule binds across the dimer.

It is found in the cytoplasm. The enzyme catalyses tRNA(Ser) + L-serine + ATP = L-seryl-tRNA(Ser) + AMP + diphosphate + H(+). It catalyses the reaction tRNA(Sec) + L-serine + ATP = L-seryl-tRNA(Sec) + AMP + diphosphate + H(+). It participates in aminoacyl-tRNA biosynthesis; selenocysteinyl-tRNA(Sec) biosynthesis; L-seryl-tRNA(Sec) from L-serine and tRNA(Sec): step 1/1. Catalyzes the attachment of serine to tRNA(Ser). Is also able to aminoacylate tRNA(Sec) with serine, to form the misacylated tRNA L-seryl-tRNA(Sec), which will be further converted into selenocysteinyl-tRNA(Sec). In Salmonella heidelberg (strain SL476), this protein is Serine--tRNA ligase.